The following is a 578-amino-acid chain: Sulfite reductase [NADPH] hemoprotein beta-component (578 aa).

[4Fe-4S] cluster contacts are provided by Cys-441, Cys-447, Cys-487, and Cys-491. Cys-491 serves as a coordination point for siroheme.

It belongs to the nitrite and sulfite reductase 4Fe-4S domain family. As to quaternary structure, alpha(8)-beta(8). The alpha component is a flavoprotein, the beta component is a hemoprotein. It depends on siroheme as a cofactor. Requires [4Fe-4S] cluster as cofactor.

It catalyses the reaction hydrogen sulfide + 3 NADP(+) + 3 H2O = sulfite + 3 NADPH + 4 H(+). It functions in the pathway sulfur metabolism; hydrogen sulfide biosynthesis; hydrogen sulfide from sulfite (NADPH route): step 1/1. Its function is as follows. Component of the sulfite reductase complex that catalyzes the 6-electron reduction of sulfite to sulfide. This is one of several activities required for the biosynthesis of L-cysteine from sulfate. The polypeptide is Sulfite reductase [NADPH] hemoprotein beta-component (Vibrio parahaemolyticus serotype O3:K6 (strain RIMD 2210633)).